Here is a 90-residue protein sequence, read N- to C-terminus: Small ribosomal subunit protein uS15 (90 aa).

Belongs to the universal ribosomal protein uS15 family. As to quaternary structure, part of the 30S ribosomal subunit. Forms a bridge to the 50S subunit in the 70S ribosome, contacting the 23S rRNA.

Its function is as follows. One of the primary rRNA binding proteins, it binds directly to 16S rRNA where it helps nucleate assembly of the platform of the 30S subunit by binding and bridging several RNA helices of the 16S rRNA. Forms an intersubunit bridge (bridge B4) with the 23S rRNA of the 50S subunit in the ribosome. The polypeptide is Small ribosomal subunit protein uS15 (Thermotoga maritima (strain ATCC 43589 / DSM 3109 / JCM 10099 / NBRC 100826 / MSB8)).